Reading from the N-terminus, the 133-residue chain is Small ribosomal subunit protein uS19 (133 aa).

It belongs to the universal ribosomal protein uS19 family.

In terms of biological role, protein S19 forms a complex with S13 that binds strongly to the 16S ribosomal RNA. The chain is Small ribosomal subunit protein uS19 from Thermococcus gammatolerans (strain DSM 15229 / JCM 11827 / EJ3).